The chain runs to 2508 residues: Male gametocyte surface protein P230p (2508 aa).

The N-terminal stretch at 1–34 (MFIYLFIYLFFKMDKKRTFYYLFFFFTFLVYVLY) is a signal peptide. Asn230, Asn254, Asn362, and Asn414 each carry an N-linked (GlcNAc...) asparagine glycan. A 6-Cys 1 domain is found at 394-516 (KILGLSTNEK…GLGETSVDKD (123 aa)). Cys443 and Cys493 form a disulfide bridge. 2 N-linked (GlcNAc...) asparagine glycosylation sites follow: Asn601 and Asn674. 5 6-Cys domains span residues 676 to 800 (SVSF…IVKR), 831 to 1096 (ITYL…LKSF), 1099 to 1231 (PIEG…LELN), 1268 to 1428 (KKHI…IPQH), and 1433 to 1565 (KFYG…NEDI). The cysteines at positions 680 and 700 are disulfide-linked. Asn703 carries an N-linked (GlcNAc...) asparagine glycan. Disulfide bonds link Cys714–Cys775 and Cys725–Cys773. Residues Asn779, Asn849, Asn986, Asn995, Asn1065, and Asn1074 are each glycosylated (N-linked (GlcNAc...) asparagine). 2 disulfides stabilise this stretch: Cys835/Cys856 and Cys871/Cys1072. 3 disulfides stabilise this stretch: Cys1103-Cys1129, Cys1144-Cys1206, and Cys1157-Cys1204. Asn1231 carries N-linked (GlcNAc...) asparagine glycosylation. Intrachain disulfides connect Cys1272/Cys1293, Cys1308/Cys1404, Cys1437/Cys1464, Cys1478/Cys1547, and Cys1488/Cys1545. A glycan (N-linked (GlcNAc...) asparagine) is linked at Asn1385. Residues Asn1525, Asn1550, Asn1567, Asn1750, Asn1755, and Asn1788 are each glycosylated (N-linked (GlcNAc...) asparagine). 6-Cys domains lie at 1656–1804 (KKKI…IKKN) and 1807–1984 (KILG…IVGD). Cys1704 and Cys1782 are disulfide-bonded. Cystine bridges form between Cys1811–Cys1883, Cys1897–Cys1966, and Cys1908–Cys1964. 2 N-linked (GlcNAc...) asparagine glycosylation sites follow: Asn2016 and Asn2047. Residues 2081–2113 (SDEGDGYQADEDIGGEDDAEDVDGEGDDEDDNI) are disordered. The segment covering 2082–2112 (DEGDGYQADEDIGGEDDAEDVDGEGDDEDDN) has biased composition (acidic residues). N-linked (GlcNAc...) asparagine glycans are attached at residues Asn2143, Asn2211, Asn2239, and Asn2255. 2 consecutive 6-Cys domains span residues 2197–2354 (IINI…VKSN) and 2357–2481 (KIYG…YEPY). Intrachain disulfides connect Cys2361–Cys2386, Cys2400–Cys2461, and Cys2411–Cys2459.

It localises to the cell surface. Its subcellular location is the cell membrane. Functionally, plays an essential role in male gamete fertility. Required for the binding to erythrocytes and thus, for the formation of exflagellation centers. The protein is Male gametocyte surface protein P230p (PFS230P) of Plasmodium falciparum (isolate 3D7).